A 426-amino-acid chain; its full sequence is Serine--tRNA ligase (426 aa).

The span at 41–60 (QTRTEQLQAERNARSKSIGQ) shows a compositional bias: polar residues. The segment at 41 to 64 (QTRTEQLQAERNARSKSIGQAKQR) is disordered. 233-235 (TAE) lines the L-serine pocket. 264–266 (RSE) is an ATP binding site. Glu287 provides a ligand contact to L-serine. 351–354 (EISS) lines the ATP pocket. L-serine is bound at residue Ser387.

The protein belongs to the class-II aminoacyl-tRNA synthetase family. Type-1 seryl-tRNA synthetase subfamily. As to quaternary structure, homodimer. The tRNA molecule binds across the dimer.

It localises to the cytoplasm. It carries out the reaction tRNA(Ser) + L-serine + ATP = L-seryl-tRNA(Ser) + AMP + diphosphate + H(+). The catalysed reaction is tRNA(Sec) + L-serine + ATP = L-seryl-tRNA(Sec) + AMP + diphosphate + H(+). It functions in the pathway aminoacyl-tRNA biosynthesis; selenocysteinyl-tRNA(Sec) biosynthesis; L-seryl-tRNA(Sec) from L-serine and tRNA(Sec): step 1/1. In terms of biological role, catalyzes the attachment of serine to tRNA(Ser). Is also able to aminoacylate tRNA(Sec) with serine, to form the misacylated tRNA L-seryl-tRNA(Sec), which will be further converted into selenocysteinyl-tRNA(Sec). The chain is Serine--tRNA ligase from Pseudomonas fluorescens (strain ATCC BAA-477 / NRRL B-23932 / Pf-5).